The chain runs to 399 residues: Chalcone synthase 2 (399 aa).

Cys-166 is an active-site residue.

It belongs to the thiolase-like superfamily. Chalcone/stilbene synthases family.

It catalyses the reaction (E)-4-coumaroyl-CoA + 3 malonyl-CoA + 3 H(+) = 2',4,4',6'-tetrahydroxychalcone + 3 CO2 + 4 CoA. Its pathway is secondary metabolite biosynthesis; flavonoid biosynthesis. Its function is as follows. The primary product of this enzyme is 4,2',4',6'-tetrahydroxychalcone (also termed naringenin-chalcone or chalcone) which can under specific conditions spontaneously isomerize into naringenin. Substrate preference is feruloyl-CoA = caffeoyl-CoA &gt;&gt; cinnamoyl-CoA. The polypeptide is Chalcone synthase 2 (CHS2) (Hordeum vulgare (Barley)).